Reading from the N-terminus, the 289-residue chain is Protease HtpX homolog (289 aa).

A run of 2 helical transmembrane segments spans residues 7-26 (TAAL…YWVI) and 31-48 (GLII…FSWY). Zn(2+) is bound at residue H132. E133 is an active-site residue. H136 contacts Zn(2+). 2 helical membrane passes run 151–171 (VAGA…FGGG) and 182–202 (LGVL…QLAI). E207 is a Zn(2+) binding site.

This sequence belongs to the peptidase M48B family. Requires Zn(2+) as cofactor.

Its subcellular location is the cell inner membrane. This chain is Protease HtpX homolog, found in Nostoc punctiforme (strain ATCC 29133 / PCC 73102).